A 407-amino-acid polypeptide reads, in one-letter code: Cytochrome P450-pinF2, plant-inducible (407 aa).

Cys356 is a heme binding site.

This sequence belongs to the cytochrome P450 family. Requires heme as cofactor.

Functionally, not essential for virulence, but may be involved in the detoxification of plant protective agents at the site of wounding. This Rhizobium radiobacter (Agrobacterium tumefaciens) protein is Cytochrome P450-pinF2, plant-inducible (cyp104).